Consider the following 299-residue polypeptide: Inactive recombination-promoting nuclease-like protein RpnE (299 aa).

The protein belongs to the Rpn/YhgA-like nuclease family.

Its function is as follows. Upon expression has no effect on RecA-independent DNA recombination, cell viability or DNA damage. This is Inactive recombination-promoting nuclease-like protein RpnE (yfaD) from Escherichia coli (strain K12).